The sequence spans 441 residues: Platelet-activating factor acetylhydrolase (441 aa).

The signal sequence occupies residues Met1 to Pro21. Ser273 functions as the Nucleophile in the catalytic mechanism. Residues Asp296 and His351 each act as charge relay system in the active site. 2 N-linked (GlcNAc...) asparagine glycosylation sites follow: Asn423 and Asn433.

The protein belongs to the AB hydrolase superfamily. Lipase family. In terms of processing, N-glycosylated. Macrophage-derived PLA2G7 carries sialylated complex-type N-glycans that hinder its binding to HDL particles. As to expression, plasma. Secreted by macrophages (at protein level).

Its subcellular location is the secreted. The protein localises to the extracellular space. It carries out the reaction a 1-O-alkyl-2-acetyl-sn-glycero-3-phosphocholine + H2O = a 1-O-alkyl-sn-glycero-3-phosphocholine + acetate + H(+). It catalyses the reaction 1-O-decyl-2-acetyl-sn-glycero-3-phosphocholine + H2O = 1-O-decyl-sn-glycero-3-phosphocholine + acetate + H(+). The enzyme catalyses 1-O-dodecyl-2-acetyl-sn-glycero-3-phosphocholine + H2O = 1-O-dodecyl-sn-glycero-3-phosphocholine + acetate + H(+). The catalysed reaction is 1-O-tetradecyl-2-acetyl-sn-glycero-3-phosphocholine + H2O = 1-O-tetradecyl-sn-glycero-3-phosphocholine + acetate + H(+). It carries out the reaction 1-O-hexadecyl-2-acetyl-sn-glycero-3-phosphocholine + H2O = 1-O-hexadecyl-sn-glycero-3-phosphocholine + acetate + H(+). It catalyses the reaction 1-O-octadecyl-2-acetyl-sn-glycero-3-phosphocholine + H2O = 1-O-octadecyl-sn-glycero-3-phosphocholine + acetate + H(+). The enzyme catalyses 1-hexadecanoyl-2-acetyl-sn-glycero-3-phosphocholine + H2O = 1-hexadecanoyl-sn-glycero-3-phosphocholine + acetate + H(+). The catalysed reaction is 1-hexadecanoyl-2-propionyl-sn-glycero-3-phosphocholine + H2O = propanoate + 1-hexadecanoyl-sn-glycero-3-phosphocholine + H(+). It carries out the reaction 1-hexadecanoyl-2-butanoyl-sn-glycero-3-phosphocholine + H2O = butanoate + 1-hexadecanoyl-sn-glycero-3-phosphocholine + H(+). It catalyses the reaction 1-hexadecanoyl-2-pentanoyl-sn-glycero-3-phosphocholine + H2O = pentanoate + 1-hexadecanoyl-sn-glycero-3-phosphocholine + H(+). The enzyme catalyses 1-hexadecanoyl-2-glutaroyl-sn-glycero-3-phosphocholine + H2O = glutarate + 1-hexadecanoyl-sn-glycero-3-phosphocholine + H(+). The catalysed reaction is 1-hexadecanoyl-2-(5-oxopentanoyl)-sn-glycero-3-phosphocholine + H2O = 5-oxopentanoate + 1-hexadecanoyl-sn-glycero-3-phosphocholine + H(+). It carries out the reaction 1-hexadecanoyl-2-(9-oxononanoyl)-sn-glycero-3-phosphocholine + H2O = 9-oxononanoate + 1-hexadecanoyl-sn-glycero-3-phosphocholine + H(+). It catalyses the reaction 1-hexadecanoyl-2-[9-hydroperoxy-(10E-octadecenoyl)]-sn-glycero-3-phosphocholine + H2O = 9-hydroperoxy-10E-octadecenoate + 1-hexadecanoyl-sn-glycero-3-phosphocholine + H(+). The enzyme catalyses 1-hexadecanoyl-2-(10-hydroperoxy-8E-octadecenoyl)-sn-glycero-3-phosphocholine + H2O = 10-hydroperoxy-(8E)-octadecenoate + 1-hexadecanoyl-sn-glycero-3-phosphocholine + H(+). In terms of biological role, lipoprotein-associated calcium-independent phospholipase A2 involved in phospholipid catabolism during inflammatory and oxidative stress response. At the lipid-aqueous interface, hydrolyzes the ester bond of fatty acyl group attached at sn-2 position of phospholipids (phospholipase A2 activity). Specifically targets phospholipids with a short-chain fatty acyl group at sn-2 position. Can hydrolyze phospholipids with long fatty acyl chains, only if they carry oxidized functional groups. Hydrolyzes and inactivates platelet-activating factor (PAF, 1-O-alkyl-2-acetyl-sn-glycero-3-phosphocholine), a potent pro-inflammatory signaling lipid that acts through PTAFR on various innate immune cells. Hydrolyzes oxidatively truncated phospholipids carrying an aldehyde group at omega position, preventing their accumulation in low-density lipoprotein (LDL) particles and uncontrolled pro-inflammatory effects. As part of high-density lipoprotein (HDL) particles, can hydrolyze phospholipids having long-chain fatty acyl hydroperoxides at sn-2 position and protect against potential accumulation of these oxylipins in the vascular wall. Catalyzes the release from membrane phospholipids of F2-isoprostanes, lipid biomarkers of cellular oxidative damage. This is Platelet-activating factor acetylhydrolase (PLA2G7) from Homo sapiens (Human).